The following is a 241-amino-acid chain: 1-(5-phosphoribosyl)-5-[(5-phosphoribosylamino)methylideneamino] imidazole-4-carboxamide isomerase (241 aa).

The active-site Proton acceptor is Asp-8. Asp-130 acts as the Proton donor in catalysis.

This sequence belongs to the HisA/HisF family.

The protein localises to the cytoplasm. It catalyses the reaction 1-(5-phospho-beta-D-ribosyl)-5-[(5-phospho-beta-D-ribosylamino)methylideneamino]imidazole-4-carboxamide = 5-[(5-phospho-1-deoxy-D-ribulos-1-ylimino)methylamino]-1-(5-phospho-beta-D-ribosyl)imidazole-4-carboxamide. It participates in amino-acid biosynthesis; L-histidine biosynthesis; L-histidine from 5-phospho-alpha-D-ribose 1-diphosphate: step 4/9. The sequence is that of 1-(5-phosphoribosyl)-5-[(5-phosphoribosylamino)methylideneamino] imidazole-4-carboxamide isomerase from Francisella philomiragia subsp. philomiragia (strain ATCC 25017 / CCUG 19701 / FSC 153 / O#319-036).